The following is a 182-amino-acid chain: UPF0316 protein BCB4264_A3368 (182 aa).

3 consecutive transmembrane segments (helical) span residues 6 to 26, 32 to 52, and 58 to 78; these read LIFV…ILLV, SAAG…GIVF, and WMNI…GGYI.

This sequence belongs to the UPF0316 family.

The protein localises to the cell membrane. The protein is UPF0316 protein BCB4264_A3368 of Bacillus cereus (strain B4264).